The following is a 50-amino-acid chain: Monellin chain B (50 aa).

In terms of assembly, heterodimer of an A chain and a B chain.

Taste-modifying protein; intensely sweet-tasting protein. The chain is Monellin chain B from Dioscoreophyllum cumminsii (Serendipity berry).